Here is a 195-residue protein sequence, read N- to C-terminus: Early light-induced protein 1, chloroplastic (195 aa).

A chloroplast-targeting transit peptide spans 1–46 (MATASFNMQSVFAGGLTTRKINTNKLFSAGSFPNLKRNYPVGVRCM). The disordered stretch occupies residues 46–81 (MAEGGPTNEDSSPAPSTSAAQPLPKSPSPPPPMKPK). Over residues 56–68 (SSPAPSTSAAQPL) the composition is skewed to low complexity. Residues 69 to 79 (PKSPSPPPPMK) show a composition bias toward pro residues. The next 3 membrane-spanning stretches (helical) occupy residues 104-124 (LAMV…ENVL), 131-151 (GVSW…VPLF), and 175-195 (FAML…GTLV).

This sequence belongs to the ELIP/psbS family.

The protein resides in the plastid. It localises to the chloroplast thylakoid membrane. In terms of biological role, prevents excess accumulation of free chlorophyll by inhibiting the entire chlorophyll biosynthesis pathway (e.g. 5-aminolevulinate synthesis and Mg-protoporphyrin IX chelatase activity), and hence prevent photooxidative stress. Probably involved in the integration of pigments into the mature light-harvesting pigment-protein complexes. Light-harvesting chlorophyll (LHC) a/b-binding protein required to ensure a high rate of chlorophyll accumulation during deetiolation in continuous high light. Involved in seed germination. May fulfill a photoprotective functions. The polypeptide is Early light-induced protein 1, chloroplastic (Arabidopsis thaliana (Mouse-ear cress)).